The following is a 432-amino-acid chain: Adenosylhomocysteinase (432 aa).

The segment at 1–24 is disordered; sequence MSAYSPLSAQLDADTDVDVESTRT. Residues D137 and E162 each contribute to the substrate site. Position 163 to 165 (163 to 165) interacts with NAD(+); that stretch reads TTT. Residues K192 and D196 each coordinate substrate. Residues N197, 226–231, E249, N284, 305–307, and N352 contribute to the NAD(+) site; these read GYGYCG and AGH.

Belongs to the adenosylhomocysteinase family. NAD(+) is required as a cofactor.

It localises to the cytoplasm. It carries out the reaction S-adenosyl-L-homocysteine + H2O = L-homocysteine + adenosine. It participates in amino-acid biosynthesis; L-homocysteine biosynthesis; L-homocysteine from S-adenosyl-L-homocysteine: step 1/1. Its function is as follows. May play a key role in the regulation of the intracellular concentration of adenosylhomocysteine. This is Adenosylhomocysteinase from Haloquadratum walsbyi (strain DSM 16790 / HBSQ001).